The chain runs to 257 residues: Large ribosomal subunit protein uL2 (257 aa).

The interval 210–231 is disordered; that stretch reads PHGGGNHQHIGKASTVKRGTSA.

It belongs to the universal ribosomal protein uL2 family.

It localises to the cytoplasm. This Mamestra brassicae (Cabbage moth) protein is Large ribosomal subunit protein uL2 (RpL8).